A 371-amino-acid polypeptide reads, in one-letter code: UDP-N-acetylglucosamine--N-acetylmuramyl-(pentapeptide) pyrophosphoryl-undecaprenol N-acetylglucosamine transferase (371 aa).

UDP-N-acetyl-alpha-D-glucosamine is bound by residues 15–17 (TGG), Asn126, Arg169, Ser197, and Gln298.

This sequence belongs to the glycosyltransferase 28 family. MurG subfamily.

It localises to the cell inner membrane. It catalyses the reaction di-trans,octa-cis-undecaprenyl diphospho-N-acetyl-alpha-D-muramoyl-L-alanyl-D-glutamyl-meso-2,6-diaminopimeloyl-D-alanyl-D-alanine + UDP-N-acetyl-alpha-D-glucosamine = di-trans,octa-cis-undecaprenyl diphospho-[N-acetyl-alpha-D-glucosaminyl-(1-&gt;4)]-N-acetyl-alpha-D-muramoyl-L-alanyl-D-glutamyl-meso-2,6-diaminopimeloyl-D-alanyl-D-alanine + UDP + H(+). The protein operates within cell wall biogenesis; peptidoglycan biosynthesis. Functionally, cell wall formation. Catalyzes the transfer of a GlcNAc subunit on undecaprenyl-pyrophosphoryl-MurNAc-pentapeptide (lipid intermediate I) to form undecaprenyl-pyrophosphoryl-MurNAc-(pentapeptide)GlcNAc (lipid intermediate II). The sequence is that of UDP-N-acetylglucosamine--N-acetylmuramyl-(pentapeptide) pyrophosphoryl-undecaprenol N-acetylglucosamine transferase from Paramagnetospirillum magneticum (strain ATCC 700264 / AMB-1) (Magnetospirillum magneticum).